Consider the following 528-residue polypeptide: MSLNSSLGHRKELSNLTEGASDQGGSGVTEFVAIVIITVFVCLGNLVIVITLYRKSYLLTLSNKFVFSLTLSNFLLSVLVLPFVVTSSIRREWIFGVVWCNFSALLYLLISSASMLTLGIIAVDRYYAVLYPMAYPMKITGNRAVMVLAYIWLHSLIGCLPPLFGWSSVEFDEFKWMCVAAWHREPGYTAFWQIWCALLPFLVMLVCYGFIFRVARVKARKVHCGAVVTVEVGVQRTGRKNSSTSTSSSGSRKSAFQGVVYSANQCKALVTILVVIGAFMVTWGPYMVVITSEALWGKNCVSPTLETWATWLSFTSAICHPLIYGLWNKTVRKELLGMCFGDRYYREPFVQRQRTSRLFSISNRITDLGLSPHLTALMAGEQPLGNSSSTGDTGFSCSQDSGTDVMLLEDYTSDDNPLHGTCPPKRRSSVTFEDEVEQIKEAAKNPILHVKADVHKSLDSYATSLAKAIEAEAKINLFGEEALPGVLLTARTVPGIGFGSRRGSRTLAGQRLQLQSIEEGDVLATEQR.

The Extracellular portion of the chain corresponds to Met-1–Glu-30. Residues Asn-4 and Asn-15 are each glycosylated (N-linked (GlcNAc...) asparagine). The helical transmembrane segment at Phe-31–Thr-51 threads the bilayer. The Cytoplasmic portion of the chain corresponds to Leu-52–Lys-64. A helical membrane pass occupies residues Phe-65–Val-85. At Thr-86–Asn-101 the chain is on the extracellular side. Cys-100 and Cys-178 are disulfide-bonded. N-linked (GlcNAc...) asparagine glycosylation occurs at Asn-101. Residues Phe-102 to Ala-122 traverse the membrane as a helical segment. The Cytoplasmic segment spans residues Val-123–Arg-143. The chain crosses the membrane as a helical span at residues Ala-144–Phe-164. Topologically, residues Gly-165–Ala-190 are extracellular. The chain crosses the membrane as a helical span at residues Phe-191 to Ile-211. Residues Phe-212–Leu-269 lie on the Cytoplasmic side of the membrane. Residues Val-270–Ile-290 traverse the membrane as a helical segment. Topologically, residues Thr-291–Glu-306 are extracellular. A helical transmembrane segment spans residues Thr-307–Trp-327. At Asn-328–Arg-528 the chain is on the cytoplasmic side.

Belongs to the G-protein coupled receptor 1 family.

It localises to the cell projection. The protein localises to the cilium membrane. The protein resides in the cell membrane. Its function is as follows. Key negative regulator of Shh signaling, which promotes the processing of GLI3 into GLI3R during neural tube development. Recruited by TULP3 and the IFT-A complex to primary cilia and acts as a regulator of the PKA-dependent basal repression machinery in Shh signaling by increasing cAMP levels, leading to promote the PKA-dependent processing of GLI3 into GLI3R and repress the Shh signaling. In presence of SHH, it is removed from primary cilia and is internalized into recycling endosomes, preventing its activity and allowing activation of the Shh signaling. Its ligand is unknown. The polypeptide is G protein-coupled receptor 161 (GPR161) (Bos taurus (Bovine)).